A 766-amino-acid polypeptide reads, in one-letter code: MNPSDLPGQIPLSRSDMNVQDQLDPVQRFDTHFMLPQEENFLNRPSITSESAHPRGSDLEQETELKRLALEHEHYSLESLAEKLRMDHVSANSEKFRQVFGICWLKRACEEQQDAAVQRNQIYAHYVEICNSLHIKPLNSASFGKLVRLLFPSIKTRRLGMRGHSKYHYCGIKLRGQDSFRRLRTFSDSSLSPVSCSSFPKPIPNHFENDVSSIQNTNQRVESSPASVNAAAIVRKSAVTPSSDPYNSPPPSIPLLGSQTNLQLAPSFAAPQAHPLPSHLSQSNVPPQLSHSSVPSPAPPRSVSQPTYFSQPMPQFSSSFVPGTSSIVPTLHPASAQEDFNLQHSLFFKLKLKFLPPHKLPWIPSLDVSSFSLPPIDYYLNGPYDNVEAKSALMNIYSSHCITLIESVRYMHLKQFLSEISNFPNSLSPSLLALLSSPYFTKWIERSDTVMYREILKLLFPMTLQVVPPPVLVLLRHLAENLVNHISSIYASHSSCLLQVKSETAAIFSNLLSRLLRVNDTAHAAARFLANPADRHLICNDWERFVSTRFIVHRELMCNDKEAVAALDEWYSILSTCSNPSELLDPLKDKHEASDTSMNRVELRQIDGVLDRMADFFLELPSRFPSCSPRMFLLCLGALQTSVLREITVSGGEAFGALWVIRCWVDEYMTWVAEIGGYLDDSYDELEQHHANFHNKAGISQSNIPPHLQEHRQSQQHFQQDIEALQSQQQQQATKNSLMEAAYQNAQKQKEDDYISIVFDTNGACS.

A DNA-binding region (RFX-type winged-helix) is located at residues 101-176 (GICWLKRACE…YHYCGIKLRG (76 aa)). Phosphoserine is present on residues Ser-223, Ser-224, and Ser-227. 2 disordered regions span residues 271–308 (PQAH…QPTY) and 708–731 (LQEH…QQQQ). A compositionally biased stretch (polar residues) spans 279–289 (HLSQSNVPPQL). Composition is skewed to low complexity over residues 290 to 308 (SHSS…QPTY) and 715 to 731 (QQHF…QQQQ).

Belongs to the RFX family.

It localises to the nucleus. In terms of biological role, positively regulates cyclic AMP-dependent protein kinase-mediated exit from the mitotic cell cycle. This is Protein sak1 (sak1) from Schizosaccharomyces pombe (strain 972 / ATCC 24843) (Fission yeast).